A 292-amino-acid chain; its full sequence is tRNA pseudouridine synthase B (292 aa).

Asp-38 serves as the catalytic Nucleophile.

The protein belongs to the pseudouridine synthase TruB family. Type 1 subfamily.

It catalyses the reaction uridine(55) in tRNA = pseudouridine(55) in tRNA. Responsible for synthesis of pseudouridine from uracil-55 in the psi GC loop of transfer RNAs. This Streptococcus pneumoniae serotype 4 (strain ATCC BAA-334 / TIGR4) protein is tRNA pseudouridine synthase B.